A 332-amino-acid polypeptide reads, in one-letter code: Lipoyl synthase (332 aa).

Positions 74, 79, 85, 100, 104, 107, and 314 each coordinate [4Fe-4S] cluster. The region spanning cysteine 85 to serine 303 is the Radical SAM core domain.

The protein belongs to the radical SAM superfamily. Lipoyl synthase family. [4Fe-4S] cluster serves as cofactor.

The protein resides in the cytoplasm. The catalysed reaction is [[Fe-S] cluster scaffold protein carrying a second [4Fe-4S](2+) cluster] + N(6)-octanoyl-L-lysyl-[protein] + 2 oxidized [2Fe-2S]-[ferredoxin] + 2 S-adenosyl-L-methionine + 4 H(+) = [[Fe-S] cluster scaffold protein] + N(6)-[(R)-dihydrolipoyl]-L-lysyl-[protein] + 4 Fe(3+) + 2 hydrogen sulfide + 2 5'-deoxyadenosine + 2 L-methionine + 2 reduced [2Fe-2S]-[ferredoxin]. It participates in protein modification; protein lipoylation via endogenous pathway; protein N(6)-(lipoyl)lysine from octanoyl-[acyl-carrier-protein]: step 2/2. In terms of biological role, catalyzes the radical-mediated insertion of two sulfur atoms into the C-6 and C-8 positions of the octanoyl moiety bound to the lipoyl domains of lipoate-dependent enzymes, thereby converting the octanoylated domains into lipoylated derivatives. In Verminephrobacter eiseniae (strain EF01-2), this protein is Lipoyl synthase.